The following is a 95-amino-acid chain: Signal recognition particle 19 kDa protein (95 aa).

It belongs to the SRP19 family. In terms of assembly, part of the signal recognition particle protein translocation system, which is composed of SRP and FtsY. Archaeal SRP consists of a 7S RNA molecule of 300 nucleotides and two protein subunits: SRP54 and SRP19.

The protein resides in the cytoplasm. In terms of biological role, involved in targeting and insertion of nascent membrane proteins into the cytoplasmic membrane. Binds directly to 7S RNA and mediates binding of the 54 kDa subunit of the SRP. This is Signal recognition particle 19 kDa protein from Desulfurococcus amylolyticus (strain DSM 18924 / JCM 16383 / VKM B-2413 / 1221n) (Desulfurococcus kamchatkensis).